We begin with the raw amino-acid sequence, 185 residues long: ATP synthase subunit b (185 aa).

The helical transmembrane segment at 28 to 48 (VVLVGFAVLMYIVVKFVVPMF) threads the bilayer.

This sequence belongs to the ATPase B chain family. As to quaternary structure, F-type ATPases have 2 components, F(1) - the catalytic core - and F(0) - the membrane proton channel. F(1) has five subunits: alpha(3), beta(3), gamma(1), delta(1), epsilon(1). F(0) has three main subunits: a(1), b(2) and c(10-14). The alpha and beta chains form an alternating ring which encloses part of the gamma chain. F(1) is attached to F(0) by a central stalk formed by the gamma and epsilon chains, while a peripheral stalk is formed by the delta and b chains.

The protein localises to the cell membrane. Its function is as follows. F(1)F(0) ATP synthase produces ATP from ADP in the presence of a proton or sodium gradient. F-type ATPases consist of two structural domains, F(1) containing the extramembraneous catalytic core and F(0) containing the membrane proton channel, linked together by a central stalk and a peripheral stalk. During catalysis, ATP synthesis in the catalytic domain of F(1) is coupled via a rotary mechanism of the central stalk subunits to proton translocation. In terms of biological role, component of the F(0) channel, it forms part of the peripheral stalk, linking F(1) to F(0). This chain is ATP synthase subunit b, found in Paenarthrobacter aurescens (strain TC1).